Consider the following 256-residue polypeptide: tRNA (guanine-N(7)-)-methyltransferase (256 aa).

A disordered region spans residues 1 to 43; that stretch reads MDVDPVNSEMELDNKPTCETVPGLPQKKHYRQRAHSNPHSDHD. Positions 26–36 are enriched in basic residues; that stretch reads QKKHYRQRAHS. S-adenosyl-L-methionine contacts are provided by residues Gly-74, 97–98, 132–133, and Leu-152; these read EI and NA. Residue Asp-155 is part of the active site. 230–232 is a binding site for S-adenosyl-L-methionine; sequence TEE.

The protein belongs to the class I-like SAM-binding methyltransferase superfamily. TrmB family.

Its subcellular location is the nucleus. It carries out the reaction guanosine(46) in tRNA + S-adenosyl-L-methionine = N(7)-methylguanosine(46) in tRNA + S-adenosyl-L-homocysteine. It functions in the pathway tRNA modification; N(7)-methylguanine-tRNA biosynthesis. In terms of biological role, catalyzes the formation of N(7)-methylguanine at position 46 (m7G46) in tRNA. This is tRNA (guanine-N(7)-)-methyltransferase from Caenorhabditis briggsae.